A 91-amino-acid polypeptide reads, in one-letter code: Small ribosomal subunit protein bS20 (91 aa).

This sequence belongs to the bacterial ribosomal protein bS20 family.

Its function is as follows. Binds directly to 16S ribosomal RNA. This is Small ribosomal subunit protein bS20 from Acidithiobacillus ferrooxidans (strain ATCC 23270 / DSM 14882 / CIP 104768 / NCIMB 8455) (Ferrobacillus ferrooxidans (strain ATCC 23270)).